A 411-amino-acid polypeptide reads, in one-letter code: MREHFNDGVEFARFLAHRFVTDKAPNSAAALTYTTLFAVVPMMTVMFSMLSLIPAFHGMGESIQTFIFRNFVPSAGEAVETYLKSFTTQARHLTWVGVVFLAVTAFTMLVTIEKAFNEIWRVRQPRRGVGRFLLYWAILSLGPLLLGAGFAVTTYITSLSLLHGPDALPGAETLLGLMPLAFSVAAFTLLYSAVPNARVPVRHALMGGVFTAVLFEAAKTLFGLYVSLFPGYQLIYGAFATVPIFLLWIYLSWMIVLFGAVLVCNLSSSRLWRRRSLPKLIVLLGVLRVFHQRQQLGQSLRLTHLHRAGWLLPEDEWEELLDFLEKEQFVCRAGGGEWVLCRDLGAYSLHRLLNRCPWPMPSRERMPASLDEAWYPPFQQAMERLQVEQEALFGESLAHWLADGTSGAKVT.

A run of 6 helical transmembrane segments spans residues 36 to 56 (LFAV…IPAF), 92 to 112 (HLTW…LVTI), 132 to 152 (FLLY…GFAV), 174 to 194 (LLGL…YSAV), 207 to 229 (GGVF…VSLF), and 244 to 264 (IFLL…VLVC).

The protein belongs to the UPF0761 family.

It localises to the cell inner membrane. The sequence is that of UPF0761 membrane protein PLES_43641 from Pseudomonas aeruginosa (strain LESB58).